The primary structure comprises 199 residues: Dephospho-CoA kinase (199 aa).

A DPCK domain is found at 3–199 (ILGLTGSIGM…ATAKMPQRRA (197 aa)). 11 to 16 (GMGKST) contacts ATP.

It belongs to the CoaE family.

It localises to the cytoplasm. It carries out the reaction 3'-dephospho-CoA + ATP = ADP + CoA + H(+). The protein operates within cofactor biosynthesis; coenzyme A biosynthesis; CoA from (R)-pantothenate: step 5/5. In terms of biological role, catalyzes the phosphorylation of the 3'-hydroxyl group of dephosphocoenzyme A to form coenzyme A. This chain is Dephospho-CoA kinase, found in Rhodopseudomonas palustris (strain BisB18).